The sequence spans 276 residues: NH(3)-dependent NAD(+) synthetase (276 aa).

Position 47-54 (47-54) interacts with ATP; it reads GISGGQDS. Asp-53 serves as a coordination point for Mg(2+). Arg-141 contributes to the deamido-NAD(+) binding site. Thr-161 serves as a coordination point for ATP. Position 166 (Glu-166) interacts with Mg(2+). Deamido-NAD(+) contacts are provided by Lys-174 and Asp-181. Residues Lys-190 and Thr-212 each contribute to the ATP site. Position 261–262 (261–262) interacts with deamido-NAD(+); sequence HK.

This sequence belongs to the NAD synthetase family. In terms of assembly, homodimer.

It carries out the reaction deamido-NAD(+) + NH4(+) + ATP = AMP + diphosphate + NAD(+) + H(+). It participates in cofactor biosynthesis; NAD(+) biosynthesis; NAD(+) from deamido-NAD(+) (ammonia route): step 1/1. In terms of biological role, catalyzes the ATP-dependent amidation of deamido-NAD to form NAD. Uses ammonia as a nitrogen source. The polypeptide is NH(3)-dependent NAD(+) synthetase (Levilactobacillus brevis (strain ATCC 367 / BCRC 12310 / CIP 105137 / JCM 1170 / LMG 11437 / NCIMB 947 / NCTC 947) (Lactobacillus brevis)).